The sequence spans 388 residues: Ferrochelatase (388 aa).

Fe cation contacts are provided by H196 and E277.

The protein belongs to the ferrochelatase family.

Its subcellular location is the cytoplasm. It carries out the reaction heme b + 2 H(+) = protoporphyrin IX + Fe(2+). It functions in the pathway porphyrin-containing compound metabolism; protoheme biosynthesis; protoheme from protoporphyrin-IX: step 1/1. Its function is as follows. Catalyzes the ferrous insertion into protoporphyrin IX. The protein is Ferrochelatase of Nostoc sp. (strain PCC 7120 / SAG 25.82 / UTEX 2576).